Here is a 384-residue protein sequence, read N- to C-terminus: GTPase Obg (384 aa).

One can recognise an Obg domain in the interval 1-159 (MKFIDEAKIE…RSLQLELKVL (159 aa)). Positions 20-46 (ATSFRREKFVPRGGPDGGDGGKGGSVW) are disordered. A compositionally biased stretch (gly residues) spans 33–43 (GPDGGDGGKGG). The 189-residue stretch at 160-348 (ADVGLLGMPN…LVHQINQYLT (189 aa)) folds into the OBG-type G domain. Residues 166–173 (GMPNAGKS), 191–195 (FTTLH), 213–216 (DIPG), 284–287 (NKLD), and 329–331 (SAL) each bind GTP. Mg(2+)-binding residues include serine 173 and threonine 193.

The protein belongs to the TRAFAC class OBG-HflX-like GTPase superfamily. OBG GTPase family. Monomer. Mg(2+) is required as a cofactor.

The protein localises to the cytoplasm. Functionally, an essential GTPase which binds GTP, GDP and possibly (p)ppGpp with moderate affinity, with high nucleotide exchange rates and a fairly low GTP hydrolysis rate. Plays a role in control of the cell cycle, stress response, ribosome biogenesis and in those bacteria that undergo differentiation, in morphogenesis control. The chain is GTPase Obg from Neisseria meningitidis serogroup C (strain 053442).